The primary structure comprises 396 residues: Lipid-A-disaccharide synthase (396 aa).

The protein belongs to the LpxB family.

It carries out the reaction a lipid X + a UDP-2-N,3-O-bis[(3R)-3-hydroxyacyl]-alpha-D-glucosamine = a lipid A disaccharide + UDP + H(+). The protein operates within bacterial outer membrane biogenesis; LPS lipid A biosynthesis. In terms of biological role, condensation of UDP-2,3-diacylglucosamine and 2,3-diacylglucosamine-1-phosphate to form lipid A disaccharide, a precursor of lipid A, a phosphorylated glycolipid that anchors the lipopolysaccharide to the outer membrane of the cell. The chain is Lipid-A-disaccharide synthase from Nitrobacter hamburgensis (strain DSM 10229 / NCIMB 13809 / X14).